Consider the following 37-residue polypeptide: Large ribosomal subunit protein bL36c (37 aa).

Belongs to the bacterial ribosomal protein bL36 family.

The protein localises to the plastid. The protein is Large ribosomal subunit protein bL36c of Cuscuta reflexa (Southern Asian dodder).